The sequence spans 310 residues: MNNNLLIIAGPTAVGKSDLSVDLAKKLNGEIISVDSMQIYKYMDIGSAKISKEEMGGIPHYLIDFVDPSKEFSVAEFKELATEKIKDIQSRGKLPILVGGTGLYINSIICNMNFAESDKDEEYREELEKIANEHGNEYLHEMLKDIDLESYNSIHFNNRKRVIRALETYKLTGKPFSSFKAKNSIYETPYNIYYYVLNMDRAKLYERINKRVDIMFEKGLLEEVKNLKAMGLTDDMQSMKGIGYKEVLYYLDGKISLEQCIEMIKQGSRNYAKRQLTWFRKDPRAIFIDKDTFSSEEDISSKIINDIINS.

10 to 17 (GPTAVGKS) is an ATP binding site. 12-17 (TAVGKS) lines the substrate pocket. Residues 35–38 (DSMQ) are interaction with substrate tRNA.

Belongs to the IPP transferase family. In terms of assembly, monomer. Mg(2+) is required as a cofactor.

The catalysed reaction is adenosine(37) in tRNA + dimethylallyl diphosphate = N(6)-dimethylallyladenosine(37) in tRNA + diphosphate. Its function is as follows. Catalyzes the transfer of a dimethylallyl group onto the adenine at position 37 in tRNAs that read codons beginning with uridine, leading to the formation of N6-(dimethylallyl)adenosine (i(6)A). The polypeptide is tRNA dimethylallyltransferase (Clostridium perfringens (strain SM101 / Type A)).